The chain runs to 130 residues: Flagellar assembly factor FliW (130 aa).

Belongs to the FliW family. As to quaternary structure, interacts with translational regulator CsrA and flagellin(s).

It localises to the cytoplasm. Its function is as follows. Acts as an anti-CsrA protein, binds CsrA and prevents it from repressing translation of its target genes, one of which is flagellin. Binds to flagellin and participates in the assembly of the flagellum. The sequence is that of Flagellar assembly factor FliW from Borrelia duttonii (strain Ly).